A 239-amino-acid polypeptide reads, in one-letter code: Uridylate kinase (239 aa).

Position 12–15 (12–15 (KLSG)) interacts with ATP. An involved in allosteric activation by GTP region spans residues 20 to 25 (GDQGAG). G54 contributes to the UMP binding site. Residues G55 and R59 each contribute to the ATP site. Residues D74 and 135 to 142 (TGNPFFTT) each bind UMP. Residues T162, Y168, and D171 each coordinate ATP.

It belongs to the UMP kinase family. Homohexamer.

The protein localises to the cytoplasm. The catalysed reaction is UMP + ATP = UDP + ADP. It participates in pyrimidine metabolism; CTP biosynthesis via de novo pathway; UDP from UMP (UMPK route): step 1/1. Its activity is regulated as follows. Allosterically activated by GTP. Inhibited by UTP. Functionally, catalyzes the reversible phosphorylation of UMP to UDP. The protein is Uridylate kinase of Methylococcus capsulatus (strain ATCC 33009 / NCIMB 11132 / Bath).